The chain runs to 234 residues: MSSSNYNINNGGDYYPLSSSNLNSTSAITNATVMEYSTMPSSSPGSMSSSPAYPAAYQAPSPCYVADPNQLYYQQQLAHNGNDMLVQAHAQAYQAQCFAWFQQQYSQLSPSSFPHPMVAHHAGFIPPPPSFLHHQHQQHPRAPSEKRRGARTPFSDSQLYALRTRFEQCDTIKVDERRKLGAVIGLSPEQIKIWFQNRRFKLRKEKYKQIKQDAVQQQKSAKEEAEEDQKHVIS.

2 disordered regions span residues 128-154 (PPSF…RTPF) and 209-234 (QIKQ…HVIS). The segment at residues 147–206 (RRGARTPFSDSQLYALRTRFEQCDTIKVDERRKLGAVIGLSPEQIKIWFQNRRFKLRKEK) is a DNA-binding region (homeobox). The segment covering 220–234 (SAKEEAEEDQKHVIS) has biased composition (basic and acidic residues).

Belongs to the NK-2 homeobox family.

It is found in the nucleus. In terms of biological role, required for mesoderm development, including specification of muscle and coelomocyte precursors. This chain is Homeobox protein ceh-51, found in Caenorhabditis elegans.